Reading from the N-terminus, the 147-residue chain is Hemoglobin subunit beta (147 aa).

Valine 2 is subject to N-acetylvaline. The Globin domain occupies 3–147; the sequence is HLTGEEKAAV…VANALAHKYH (145 aa). Phosphothreonine is present on threonine 13. Serine 45 bears the Phosphoserine mark. An N6-acetyllysine modification is found at lysine 60. Histidine 64 serves as a coordination point for heme b. Lysine 83 is modified (N6-acetyllysine). Histidine 93 contacts heme b. Residue cysteine 94 is modified to S-nitrosocysteine. The residue at position 145 (lysine 145) is an N6-acetyllysine.

The protein belongs to the globin family. Heterotetramer of two alpha chains and two beta chains. As to expression, red blood cells.

In terms of biological role, involved in oxygen transport from the lung to the various peripheral tissues. The sequence is that of Hemoglobin subunit beta (HBB) from Ateles belzebuth (White-bellied spider monkey).